Consider the following 184-residue polypeptide: MAKYNEKELADTSKFLSFVLRHKPEAIGIVLDREGWADIDKLILCAQKAGKRLTRALLDTVVATSDKKRFSYSSDGRCIRAVQGHSTSQVAISFAEKTPPQFLYHGTASRFLDEIKKQGLIAGERHYVHLSADEATARKVGARHGSSVILTVKAQEMAKRGLPFWQAENGVWLTSTVAVEFLEW.

This sequence belongs to the KptA/TPT1 family.

In terms of biological role, removes the 2'-phosphate from RNA via an intermediate in which the phosphate is ADP-ribosylated by NAD followed by a presumed transesterification to release the RNA and generate ADP-ribose 1''-2''-cyclic phosphate (APPR&gt;P). May function as an ADP-ribosylase. The protein is Probable RNA 2'-phosphotransferase of Escherichia coli (strain K12 / MC4100 / BW2952).